The primary structure comprises 81 residues: Large ribosomal subunit protein uL24 (81 aa).

This sequence belongs to the universal ribosomal protein uL24 family. In terms of assembly, part of the 50S ribosomal subunit.

Its function is as follows. One of two assembly initiator proteins, it binds directly to the 5'-end of the 23S rRNA, where it nucleates assembly of the 50S subunit. One of the proteins that surrounds the polypeptide exit tunnel on the outside of the subunit. The polypeptide is Large ribosomal subunit protein uL24 (Chloroherpeton thalassium (strain ATCC 35110 / GB-78)).